The sequence spans 596 residues: Fumarate reductase (cytochrome) (596 aa).

An N-terminal signal peptide occupies residues 1 to 25 (MKKMNLAVCIATLMGTAGLMGTAVA). The heme c site is built by His33, Cys39, Cys42, His43, Cys61, Cys64, His65, His83, His86, Cys93, Cys96, His97, Ala99, His100, Cys107, Cys110, and His111. The interval 143-596 (ALASAPHDTV…EEAAKYSKKN (454 aa)) is flavoprotein-like. FAD is bound by residues Ala162, Glu181, Asn189, Ala194, Gly195, Gly196, Gly303, and Asp369. Gly195 serves as a coordination point for fumarate. Succinate is bound at residue Gly195. Residue Tyr386 coordinates heme c. 3 residues coordinate succinate: His390, Thr402, and Glu403. Fumarate contacts are provided by Thr402 and Glu403. Arg427 functions as the Proton donor in the catalytic mechanism. Residue His529 coordinates fumarate. A succinate-binding site is contributed by His529. Positions 530 and 559 each coordinate FAD. Fumarate contacts are provided by Arg569 and Gly572. Residues Arg569 and Gly572 each contribute to the succinate site. The FAD site is built by Ala574 and Ile575.

The protein in the C-terminal section; belongs to the FAD-dependent oxidoreductase 2 family. FRD/SDH subfamily. As to quaternary structure, monomer. It depends on FAD as a cofactor. Heme c is required as a cofactor.

It is found in the periplasm. It carries out the reaction 2 Fe(III)-[cytochrome c] + succinate = fumarate + 2 Fe(II)-[cytochrome c] + 2 H(+). Mesaconic acid is a competitive inhibitor of fumarate reduction. Its function is as follows. Flavocytochrome that catalyzes the reduction of fumarate to succinate. Is essential for fumarate respiration during anaerobic growth, acting as the terminal reductase. Receives electrons from the membrane-bound tetraheme c-type cytochrome CymA. Is essentially unidirectional, catalyzing only fumarate reduction. Cannot reduce nitrite, dimethylsulphoxide, trimethylamine-N-oxide (TMAO) or sulfite. In vitro, can use the artificial electron donor methyl viologen. This is Fumarate reductase (cytochrome) from Shewanella frigidimarina (strain NCIMB 400).